Reading from the N-terminus, the 122-residue chain is MIQPQSYLKVTDNSGARKLMCIRILGTNNCKYANTGDTIIAVVKESVPNMPVKKSEIVRAVIVRTRKEMKRDNGIIIRFDDNAAVVINREGNLKGTRVHGPVDRELWKKNFTKIVSLAPEAF.

Belongs to the universal ribosomal protein uL14 family. Part of the 50S ribosomal subunit.

The protein resides in the plastid. Its subcellular location is the chloroplast. Its function is as follows. Binds to 23S rRNA. This is Large ribosomal subunit protein uL14c from Psilotum nudum (Whisk fern).